Consider the following 171-residue polypeptide: Small ribosomal subunit protein uS5 (171 aa).

One can recognise an S5 DRBM domain in the interval 15–78 (YEEKVVKIKR…EKAKKQLIRI (64 aa)).

The protein belongs to the universal ribosomal protein uS5 family. In terms of assembly, part of the 30S ribosomal subunit. Contacts proteins S4 and S8.

In terms of biological role, with S4 and S12 plays an important role in translational accuracy. Located at the back of the 30S subunit body where it stabilizes the conformation of the head with respect to the body. The sequence is that of Small ribosomal subunit protein uS5 from Phytoplasma australiense.